Here is a 234-residue protein sequence, read N- to C-terminus: 5'-methylthioadenosine/S-adenosylhomocysteine nucleosidase (234 aa).

E12 acts as the Proton acceptor in catalysis. Residues G78, I152, and M173–E174 contribute to the substrate site. Residue D197 is the Proton donor of the active site.

It belongs to the PNP/UDP phosphorylase family. MtnN subfamily.

It carries out the reaction S-adenosyl-L-homocysteine + H2O = S-(5-deoxy-D-ribos-5-yl)-L-homocysteine + adenine. It catalyses the reaction S-methyl-5'-thioadenosine + H2O = 5-(methylsulfanyl)-D-ribose + adenine. The enzyme catalyses 5'-deoxyadenosine + H2O = 5-deoxy-D-ribose + adenine. It participates in amino-acid biosynthesis; L-methionine biosynthesis via salvage pathway; S-methyl-5-thio-alpha-D-ribose 1-phosphate from S-methyl-5'-thioadenosine (hydrolase route): step 1/2. In terms of biological role, catalyzes the irreversible cleavage of the glycosidic bond in both 5'-methylthioadenosine (MTA) and S-adenosylhomocysteine (SAH/AdoHcy) to adenine and the corresponding thioribose, 5'-methylthioribose and S-ribosylhomocysteine, respectively. Also cleaves 5'-deoxyadenosine, a toxic by-product of radical S-adenosylmethionine (SAM) enzymes, into 5-deoxyribose and adenine. The chain is 5'-methylthioadenosine/S-adenosylhomocysteine nucleosidase from Desulfotalea psychrophila (strain LSv54 / DSM 12343).